The chain runs to 366 residues: MIVTETIIRFENVTKQFDNDPPVLDNVSFEIEKGKFYTLLGPSGCGKTTILRLIAGFLEASKGQIYLGDKVINQIPANKRPVNTVFQDYALFPHLNVYENVAFGLRIKKLKKEAIDEKVKEALRFVNLKGYEKREISEMSGGQRQRVAIARAIVNEPEVILLDEPLSALDLKLRTEMQYELRDLQKRLGITFIFVTHDQEEALAMSDEIFVLNKGEIQQSGTPIDIYDEPINKFVADFIGESNIVNGKMIQDFEVEFVERRFECVDQGFRPNEVVEVVIRPEDLEITSAEKGQLQVTVDWMLFRGVHYEVGCIDIDGNEWLVHTTRKVRVGDKIGLAFEPEAIHVMRLGETEEEFDKRLDSYDEVQ.

An ABC transporter domain is found at 8 to 239 (IRFENVTKQF…PINKFVADFI (232 aa)). 41 to 48 (GPSGCGKT) lines the ATP pocket.

Belongs to the ABC transporter superfamily. Spermidine/putrescine importer (TC 3.A.1.11.1) family. The complex is composed of two ATP-binding proteins (PotA), two transmembrane proteins (PotB and PotC) and a solute-binding protein (PotD).

The protein resides in the cell membrane. The catalysed reaction is ATP + H2O + polyamine-[polyamine-binding protein]Side 1 = ADP + phosphate + polyamineSide 2 + [polyamine-binding protein]Side 1.. Functionally, part of the ABC transporter complex PotABCD involved in spermidine/putrescine import. Responsible for energy coupling to the transport system. In Listeria monocytogenes serovar 1/2a (strain ATCC BAA-679 / EGD-e), this protein is Spermidine/putrescine import ATP-binding protein PotA.